Consider the following 103-residue polypeptide: Pyrimidine/purine nucleoside phosphorylase (103 aa).

It belongs to the nucleoside phosphorylase PpnP family.

The enzyme catalyses a purine D-ribonucleoside + phosphate = a purine nucleobase + alpha-D-ribose 1-phosphate. It catalyses the reaction adenosine + phosphate = alpha-D-ribose 1-phosphate + adenine. It carries out the reaction cytidine + phosphate = cytosine + alpha-D-ribose 1-phosphate. The catalysed reaction is guanosine + phosphate = alpha-D-ribose 1-phosphate + guanine. The enzyme catalyses inosine + phosphate = alpha-D-ribose 1-phosphate + hypoxanthine. It catalyses the reaction thymidine + phosphate = 2-deoxy-alpha-D-ribose 1-phosphate + thymine. It carries out the reaction uridine + phosphate = alpha-D-ribose 1-phosphate + uracil. The catalysed reaction is xanthosine + phosphate = alpha-D-ribose 1-phosphate + xanthine. Functionally, catalyzes the phosphorolysis of diverse nucleosides, yielding D-ribose 1-phosphate and the respective free bases. Can use uridine, adenosine, guanosine, cytidine, thymidine, inosine and xanthosine as substrates. Also catalyzes the reverse reactions. This chain is Pyrimidine/purine nucleoside phosphorylase, found in Sulfurimonas denitrificans (strain ATCC 33889 / DSM 1251) (Thiomicrospira denitrificans (strain ATCC 33889 / DSM 1251)).